A 447-amino-acid chain; its full sequence is Citrate synthase-like protein oryE (447 aa).

Catalysis depends on residues H331 and D387.

This sequence belongs to the citrate synthase family.

It participates in secondary metabolite biosynthesis. Its function is as follows. Citrate synthase-like protein; part of the gene cluster that mediates the biosynthesis of oryzines, natural products with an unusual maleidride backbone. The two subunits of the fungal fatty acid synthase oryfasA and oryfasB probably form octenoic acid. This fatty acid is most likely activated by the acyl-CoA ligase oryP to give octenyl-CoA before the citrate synthase-like protein oryE catalyzes condensation with oxaloacetate to form tricarboxylic acid. The next steps of the pathways are conjectural, but a favorite possible route has been proposed, beginning with decarboxylation and concomitant dehydration by the decarboxylase oryM, followed by tautomerization, which may lead to the production of a diene intermediate. Reduction of this diene intermediate could give the known metabolite piliformic acid. On the pathway to oryzine B and oryzine A, however, hydroxylation of the diene by the alpha-ketoglutarate-dependent dioxygenase oryG and lactonisation by the lactonohydrolases oryH or oryL could give oryzine B directly. Finally, enoyl reduction by the dehydrogenase oryD would then convert oryzine B into oryzine A. The sequence is that of Citrate synthase-like protein oryE from Aspergillus oryzae (strain ATCC 42149 / RIB 40) (Yellow koji mold).